We begin with the raw amino-acid sequence, 336 residues long: Probable long-chain-alcohol O-fatty-acyltransferase 8 (336 aa).

8 helical membrane passes run 7-27 (SFVK…YIPS), 38-58 (SVLP…FTIF), 59-79 (SSTT…LFAF), 82-102 (GPLL…CLPI), 117-135 (WVFF…VHNY), 152-172 (LYLV…IILG), 228-248 (MGCW…YFYI), and 284-304 (PMLS…FLFF).

The protein belongs to the wax synthase family.

Its subcellular location is the membrane. It carries out the reaction a long chain fatty alcohol + a fatty acyl-CoA = a wax ester + CoA. Functionally, catalyzes the final step in the synthesis of long-chain linear esters (waxes). This chain is Probable long-chain-alcohol O-fatty-acyltransferase 8, found in Arabidopsis thaliana (Mouse-ear cress).